The sequence spans 424 residues: Protein UL117 (424 aa).

The disordered stretch occupies residues 57–82 (IVPTTSSSLAPPRDDERRPTPPLRPP).

The protein belongs to the herpesviridae U84 family.

Its subcellular location is the host nucleus. Functionally, plays a role in the inhibition of host DNA replication in the infected cell. Targets the mini-chromosome maintenance (MCM) complex and blocks the accumulation of MCM proteins and their loading onto host chromatin. The chain is Protein UL117 (UL117) from Human cytomegalovirus (strain AD169) (HHV-5).